We begin with the raw amino-acid sequence, 612 residues long: MPEYRSRTSTAGRNMAGARALWRATGMKDGDFHKPIIAIANSFTQFVPGHVHLKDLGQLVAREIEQVGGVAKEFNTIAVDDGIAMGHDGMLYSLPSREIIADAVEYMVNAHCADALVCISNCDKITPGMLMAALRLNIPVVFVSGGPMEAGKTKLSEHKLDLVDAMVVAADDSASDEKVAAFERSACPTCGSCSGMFTANSMNCLTEALGLSLPGNGTTLATHADREALFRRAGRLIVELCHRWYGGEDPSALPRGIATQAAFANAMTLDIAMGGSTNTILHLLAAAQEAEVDFDLTHIDALSRRVPQLCKVAPNTPKYHIEDVHRAGGVFGILGELDRAGLLETTVPTVHSASLADALERWDVVRSDNDTLHTFFKAGPAGIPTQEAFSQATRWPTLDVDRAEGCIRSLQHAYSLEGGLAVLRGNLAVDGCVVKTAGVDESIHVFEGPARVYESQDAAVAGILADEVQPGEVVVIRYEGPKGGPGMQEMLYPTSYLKSKGLGKQCALLTDGRFSGGTSGLSIGHVSPEAASGGVIGLVEDGDRIRIDIPARRIDLLLDEAVLAQRRSDADARGWKPRAPRPRKVTSALKAYALLATSADKGAVRNTALLGD.

Aspartate 81 contacts Mg(2+). Cysteine 122 contributes to the [2Fe-2S] cluster binding site. The Mg(2+) site is built by aspartate 123 and lysine 124. Lysine 124 bears the N6-carboxylysine mark. Cysteine 193 serves as a coordination point for [2Fe-2S] cluster. Glutamate 489 contacts Mg(2+). The Proton acceptor role is filled by serine 515.

Belongs to the IlvD/Edd family. In terms of assembly, homodimer. Requires [2Fe-2S] cluster as cofactor. Mg(2+) serves as cofactor.

The catalysed reaction is (2R)-2,3-dihydroxy-3-methylbutanoate = 3-methyl-2-oxobutanoate + H2O. It catalyses the reaction (2R,3R)-2,3-dihydroxy-3-methylpentanoate = (S)-3-methyl-2-oxopentanoate + H2O. It functions in the pathway amino-acid biosynthesis; L-isoleucine biosynthesis; L-isoleucine from 2-oxobutanoate: step 3/4. It participates in amino-acid biosynthesis; L-valine biosynthesis; L-valine from pyruvate: step 3/4. Functionally, functions in the biosynthesis of branched-chain amino acids. Catalyzes the dehydration of (2R,3R)-2,3-dihydroxy-3-methylpentanoate (2,3-dihydroxy-3-methylvalerate) into 2-oxo-3-methylpentanoate (2-oxo-3-methylvalerate) and of (2R)-2,3-dihydroxy-3-methylbutanoate (2,3-dihydroxyisovalerate) into 2-oxo-3-methylbutanoate (2-oxoisovalerate), the penultimate precursor to L-isoleucine and L-valine, respectively. This is Dihydroxy-acid dehydratase from Stenotrophomonas maltophilia (strain K279a).